We begin with the raw amino-acid sequence, 110 residues long: UPF0145 protein (110 aa).

Belongs to the UPF0145 family.

The sequence is that of UPF0145 protein from Listeria welshimeri.